The sequence spans 130 residues: Small ribosomal subunit protein uS9 (130 aa).

Belongs to the universal ribosomal protein uS9 family.

In Aeromonas hydrophila subsp. hydrophila (strain ATCC 7966 / DSM 30187 / BCRC 13018 / CCUG 14551 / JCM 1027 / KCTC 2358 / NCIMB 9240 / NCTC 8049), this protein is Small ribosomal subunit protein uS9.